The chain runs to 467 residues: Venom prothrombin activator pseutarin-C catalytic subunit (467 aa).

The first 22 residues, 1–22, serve as a signal peptide directing secretion; it reads MAPQLLLCLILTFLWSLPEAES. Positions 23–40 are excised as a propeptide; the sequence is NVFLKSKVANRFLQRTKR. The region spanning 41–86 is the Gla domain; it reads ANSLVEEFKSGNIERECIEERCSKEEAREVFEDDEKTETFWNVYVD. A 4-carboxyglutamate mark is found at Glu-46, Glu-47, Glu-54, Glu-56, Glu-59, Glu-60, Glu-65, Glu-66, Glu-69, and Glu-72. An intrachain disulfide couples Cys-57 to Cys-62. The region spanning 86–122 is the EGF-like 1; calcium-binding domain; it reads DGDQCSSNPCHYRGICKDGIGSYTCTCLSGYEGKNCE. 11 cysteine pairs are disulfide-bonded: Cys-90-Cys-101, Cys-95-Cys-110, Cys-112-Cys-121, Cys-129-Cys-140, Cys-136-Cys-149, Cys-151-Cys-164, Cys-172-Cys-329, Cys-216-Cys-221, Cys-236-Cys-252, Cys-377-Cys-391, and Cys-402-Cys-430. An O-linked (Hex...) serine glycan is attached at Ser-92. One can recognise an EGF-like 2 domain in the interval 129 to 164; sequence CRVDNGNCWHFCKSVQNDIQCSCAEGYLLGEDGHSC. Residues 182–209 constitute a propeptide, activation peptide; sequence REASLPDFVQSHNATLLKKSDNPSPDIR. The region spanning 210-454 is the Peptidase S1 domain; sequence IVNGMDCKLG…FIPWIKRIMR (245 aa). The Charge relay system role is filled by His-251. Residue Asn-254 is glycosylated (N-linked (GlcNAc...) asparagine). Asp-309 (charge relay system) is an active-site residue. Catalysis depends on Ser-406, which acts as the Charge relay system.

Belongs to the peptidase S1 family. Snake venom subfamily. As to quaternary structure, heterodimer of a light and a heavy chains; disulfide-linked. Is associated with pseutarin-C non-catalytic subunit (AC Q7SZN0) in a non-covalent manner. Post-translationally, gamma-carboxyglutamate residues are formed by vitamin K dependent carboxylation. These residues are essential for the binding of calcium. As to expression, expressed by the venom gland.

It localises to the secreted. It catalyses the reaction Selective cleavage of Arg-|-Thr and then Arg-|-Ile bonds in prothrombin to form thrombin.. Activated by calcium and negatively charged phospholipids. Functionally, snake prothrombin activator that attacks the hemostatic system of prey. This non-catalytic subunit is functionally similar to blood coagulation factor V. It serves as a critical cofactor for the prothrombinase activity of the catalytic subunit, which is similar to the blood coagulation factor X. The complex converts prothrombin to thrombin by sequential cleavage at two positions, Arg-320 followed by Arg-271. Cleavage at Arg-320 produces an active intermediate known as meizothrombin. Meizothrombin is the 'second' substrate for prothrombinase, and it docks in an altered manner to present the second cleavage site (271). Cleavage at Arg-271 releases active thrombin from its pro-fragment. This order of events is reversed if the protease component of prothrombinase is used on its own, suggesting that the 271 site is inherently more accessible to proteolysis. The complex converts prothrombin to thrombin in presence but also in the absence of membrane. The protein is Venom prothrombin activator pseutarin-C catalytic subunit of Pseudonaja textilis (Eastern brown snake).